A 108-amino-acid chain; its full sequence is UPF0060 membrane protein sll0793 (108 aa).

4 helical membrane-spanning segments follow: residues 7–27 (LYFVMAGLCEIGGGYLVWLWI), 32–52 (SVWLALVRAILLTVYGFVATL), 64–84 (YGGIFIILSIIWGWQVDNVVV), and 86–106 (RLDWLGAAIALVGVLVMMYAN).

Belongs to the UPF0060 family.

Its subcellular location is the cell inner membrane. In Synechocystis sp. (strain ATCC 27184 / PCC 6803 / Kazusa), this protein is UPF0060 membrane protein sll0793.